The primary structure comprises 556 residues: Genetic interactor of prohibitins 3, mitochondrial (556 aa).

A mitochondrion-targeting transit peptide spans 1–21; that stretch reads MLNLCHALRGVRQFSCSVIVK. The CP-type G domain occupies 113–305; it reads ESTLNDILNY…LFDLPGYSTS (193 aa).

The protein belongs to the TRAFAC class YlqF/YawG GTPase family. GEP3 subfamily.

It is found in the mitochondrion. Its function is as follows. Interacts genetically with prohibitins and thus may be involved in the mitochondrial lipid metabolism. In Saccharomyces cerevisiae (strain ATCC 204508 / S288c) (Baker's yeast), this protein is Genetic interactor of prohibitins 3, mitochondrial (GEP3).